Consider the following 386-residue polypeptide: Adiponectin receptor protein 2 (386 aa).

A disordered region spans residues 1 to 72 (MNEPAKHRLG…ECHDDNSQED (72 aa)). At 1-147 (MNEPAKHRLG…SIFRIHTETG (147 aa)) the chain is on the cytoplasmic side. Residues 15–31 (PEPDIRLRKGHQLDDTR) are compositionally biased toward basic and acidic residues. The span at 58–72 (SPEEPECHDDNSQED) shows a compositional bias: acidic residues. A helical membrane pass occupies residues 148–168 (NIWTHLLGCVFFLCLGIFYMF). Topologically, residues 169 to 181 (RPNISFVAPLQEK) are extracellular. Residues 182–202 (VVFGLFFLGAILCLSFSWLFH) traverse the membrane as a helical segment. His-202 provides a ligand contact to Zn(2+). At 203–213 (TVYCHSEGVSR) the chain is on the cytoplasmic side. Residues 214–234 (LFSKLDYSGIALLIMGSFVPW) traverse the membrane as a helical segment. Over 235-245 (LYYSFYCNPQP) the chain is Extracellular. The chain crosses the membrane as a helical span at residues 246–266 (CFIYLIVICVLGIAAIIVSQW). Residues 267-273 (DMFATPQ) are Cytoplasmic-facing. A helical membrane pass occupies residues 274–294 (YRGVRAGVFVGLGLSGIIPTL). Topologically, residues 295–309 (HYVISEGFLKAATIG) are extracellular. A helical membrane pass occupies residues 310 to 330 (QIGWLMLMASLYITGAALYAA). The Cytoplasmic portion of the chain corresponds to 331 to 348 (RIPERFFPGKCDIWFHSH). Residues His-348 and His-352 each coordinate Zn(2+). Residues 349 to 369 (QLFHIFVVAGAFVHFHGVSNL) form a helical membrane-spanning segment. Over 370 to 386 (QEFRFMIGGGCTEEDAL) the chain is Extracellular.

The protein belongs to the ADIPOR family. As to quaternary structure, may form homooligomers and heterooligomers with ADIPOR1. Interacts with APPL2 (via BAR domain); ADIPOQ dissociates this interaction. Detected in liver and quadriceps muscle (at protein level). Highly expressed in liver. Highly expressed in white adipose tissue, and at intermediate levels in brown adipose tissue. Expressed at intermediate level in heart, kidney, lung and skeletal muscle. Weakly expressed in brain, spleen and testis.

It is found in the cell membrane. Functionally, receptor for ADIPOQ, an essential hormone secreted by adipocytes that regulates glucose and lipid metabolism. Required for normal body fat and glucose homeostasis. ADIPOQ-binding activates a signaling cascade that leads to increased PPARA activity, and ultimately to increased fatty acid oxidation and glucose uptake. Has intermediate affinity for globular and full-length adiponectin. Required for normal revascularization after chronic ischemia caused by severing of blood vessels. The polypeptide is Adiponectin receptor protein 2 (Mus musculus (Mouse)).